The chain runs to 361 residues: Histidinol-phosphate aminotransferase (361 aa).

K223 carries the N6-(pyridoxal phosphate)lysine modification.

The protein belongs to the class-II pyridoxal-phosphate-dependent aminotransferase family. Histidinol-phosphate aminotransferase subfamily. As to quaternary structure, homodimer. The cofactor is pyridoxal 5'-phosphate.

It carries out the reaction L-histidinol phosphate + 2-oxoglutarate = 3-(imidazol-4-yl)-2-oxopropyl phosphate + L-glutamate. It participates in amino-acid biosynthesis; L-histidine biosynthesis; L-histidine from 5-phospho-alpha-D-ribose 1-diphosphate: step 7/9. This Deinococcus radiodurans (strain ATCC 13939 / DSM 20539 / JCM 16871 / CCUG 27074 / LMG 4051 / NBRC 15346 / NCIMB 9279 / VKM B-1422 / R1) protein is Histidinol-phosphate aminotransferase.